Consider the following 387-residue polypeptide: MTLAYNKRHQIVRPDSCLSVLQQRLKYARSELQESACYFVENVPVWPGAAAPTPFAASTDIFQHADCNGAPPLINTICARDNALYGLDLSDENFLVTNGGMHGLSLVFRQIKRRSAEAGSAVCLAPVFGAVPALLEATGYDLIYYQMSAAFPTVEEILAVCRADTRLVYLNFPHNPLGGIYSDAFIEQLVPSLAERGISLVLDMVYDSFIFDDQKIRSPFACTNDLSLLYTVNSVSKNYGSPGLRIGWVASSSDNVEAMAGMLEIECVAVCSPAQTKAASLISMGNAPLHQQVVSSRAIVREFLGRHLSRYASLPPAGTQVFVNLPVHDIEGFADQMLGEYGLVLATASNYSGAQGAHIRIPTGYPESITHNALELLRQGIERYADV.

Lys237 is subject to N6-(pyridoxal phosphate)lysine.

It belongs to the class-I pyridoxal-phosphate-dependent aminotransferase family. The cofactor is pyridoxal 5'-phosphate.

The enzyme catalyses (3R)-5-guanidino-3-methyl-2-oxopentanoate + L-aspartate = (3R)-3-methyl-L-arginine + oxaloacetate. It participates in antibiotic biosynthesis. Aminotransferase involved in the formation of the rare amino acid 3-methylarginine (MeArg), which is used as a potent antibiotic against the closely related soybean pathogen P.syringae pv. glycinea. Probably catalyzes transamination from the donor L-aspartate to 5-guanidino-3-methyl-2-oxopentanoic acid, generating 3-methylarginine. The polypeptide is L-aspartate:5-guanidino-3-methyl-2-oxopentanoate transaminase (Pseudomonas syringae pv. syringae).